Here is a 641-residue protein sequence, read N- to C-terminus: Leucine-rich repeat receptor-like serine/threonine/tyrosine-protein kinase SOBIR1 (641 aa).

The first 31 residues, 1–31 (MAVPTGSANLFLRPLILAVLSFLLLSSFVSS), serve as a signal peptide directing secretion. The Extracellular segment spans residues 32–284 (VEWLDIDSSD…KKKKSKKKKV (253 aa)). LRR repeat units lie at residues 112-133 (ELKE…DILS), 136-159 (QLEV…SSLS), 160-182 (RLRI…KNLR), 183-205 (NLEN…IVSF), and 207-228 (NLRF…VMSS). N-linked (GlcNAc...) asparagine glycosylation occurs at N154. The N-linked (GlcNAc...) asparagine glycan is linked to N186. The tract at residues 243-278 (AETPTSSPTNKPNNSTTSKAPKGAPKPGKLKKKKKK) is disordered. Residues 245-259 (TPTSSPTNKPNNSTT) show a composition bias toward polar residues. N256 carries N-linked (GlcNAc...) asparagine glycosylation. Residues 260–269 (SKAPKGAPKP) show a composition bias toward low complexity. Residues 285–305 (AAWILGFVVGAIGGTISGFVF) form a helical membrane-spanning segment. Topologically, residues 306–641 (SVLFKLIIQA…VRTMLSQIKH (336 aa)) are cytoplasmic. One can recognise a Protein kinase domain in the interval 347–641 (LASLEIIGRG…VRTMLSQIKH (295 aa)). ATP contacts are provided by residues 353–361 (IGRGGCGEV) and K377. The Proton acceptor role is filled by D489.

This sequence belongs to the protein kinase superfamily. Ser/Thr protein kinase family. Interacts with CST. Interacts with RLP23. Component of a trimeric complex composed of RLP23, SOBIR1 and BAK1. BAK1 is recruited into a pre-formed RLP23-SOBIR1 complex in a ligand-dependent manner. Post-translationally, autophosphorylated on Ser, Thr and Tyr residues. In terms of tissue distribution, mostly present in leaves and flowers, with increasing expression in older flowers.

The protein resides in the cell membrane. The catalysed reaction is L-seryl-[protein] + ATP = O-phospho-L-seryl-[protein] + ADP + H(+). It catalyses the reaction L-threonyl-[protein] + ATP = O-phospho-L-threonyl-[protein] + ADP + H(+). The enzyme catalyses L-tyrosyl-[protein] + ATP = O-phospho-L-tyrosyl-[protein] + ADP + H(+). Functionally, dual specificity kinase acting on both serine/threonine- and tyrosine-containing substrates. Acting as a counterplayer of BIR1, promotes the activation of plant defense and cell death. Component of the RLP23-SOBIR1-BAK1 complex that mediates NLP-triggered immunity. Functions as an inhibitor/regulator of abscission, probably by regulating membrane trafficking during abscission. This is Leucine-rich repeat receptor-like serine/threonine/tyrosine-protein kinase SOBIR1 (SOBIR1) from Arabidopsis thaliana (Mouse-ear cress).